A 511-amino-acid polypeptide reads, in one-letter code: Maturase K (511 aa).

Belongs to the intron maturase 2 family. MatK subfamily.

Its subcellular location is the plastid. The protein localises to the chloroplast. Its function is as follows. Usually encoded in the trnK tRNA gene intron. Probably assists in splicing its own and other chloroplast group II introns. This is Maturase K from Brachypodium sylvaticum (False brome).